Consider the following 133-residue polypeptide: Large-conductance mechanosensitive channel (133 aa).

2 helical membrane passes run 14–34 (VVDL…VTTL) and 73–93 (FITV…MVVV).

It belongs to the MscL family. Homopentamer.

The protein localises to the cell membrane. Its function is as follows. Channel that opens in response to stretch forces in the membrane lipid bilayer. May participate in the regulation of osmotic pressure changes within the cell. This chain is Large-conductance mechanosensitive channel, found in Renibacterium salmoninarum (strain ATCC 33209 / DSM 20767 / JCM 11484 / NBRC 15589 / NCIMB 2235).